The following is a 35-amino-acid chain: UPF0387 membrane protein YohO (35 aa).

A helical transmembrane segment spans residues 6–26; it reads IGVIALFLFMALGGIGGVMLA.

It belongs to the UPF0387 family.

It is found in the cell inner membrane. The protein is UPF0387 membrane protein YohO of Shigella boydii serotype 4 (strain Sb227).